The sequence spans 210 residues: HTH-type transcriptional repressor FabR (210 aa).

One can recognise an HTH tetR-type domain in the interval 10-70 (KTRRSLVEAA…TMVDESGLML (61 aa)). Positions 33 to 52 (SLREVAREAGIAPTSFYRHF) form a DNA-binding region, H-T-H motif.

In terms of assembly, homodimer.

The protein localises to the cytoplasm. Its function is as follows. Represses the transcription of fabB, involved in unsaturated fatty acid (UFA) biosynthesis. By controlling UFA production, FabR directly influences the physical properties of the membrane bilayer. This Salmonella paratyphi A (strain ATCC 9150 / SARB42) protein is HTH-type transcriptional repressor FabR.